A 102-amino-acid polypeptide reads, in one-letter code: Vacuolar ATPase assembly integral membrane protein VMA21 homolog (102 aa).

Residues 1 to 33 (MTTSSSSEPSTMATLFPNFRDQEVQSAVKNLLT) are Cytoplasmic-facing. A helical membrane pass occupies residues 34–54 (YSLVILIVPLASMFLLKQFFF). At 55–67 (EGLLGVSANDALT) the chain is on the lumenal side. Residues 68-88 (YSAIIAVVLVHVVLGIWLFAA) traverse the membrane as a helical segment. Topologically, residues 89-102 (TKQEDRKKRENKQD) are cytoplasmic.

It belongs to the VMA21 family.

The protein resides in the endoplasmic reticulum membrane. The protein localises to the endoplasmic reticulum-Golgi intermediate compartment membrane. It is found in the cytoplasmic vesicle. Its subcellular location is the COPII-coated vesicle membrane. Functionally, required for the assembly of the V0 complex of the vacuolar ATPase (V-ATPase) in the endoplasmic reticulum. This is Vacuolar ATPase assembly integral membrane protein VMA21 homolog from Caenorhabditis elegans.